A 424-amino-acid polypeptide reads, in one-letter code: E3 ubiquitin-protein ligase RNF26 (424 aa).

The next 5 membrane-spanning stretches (helical) occupy residues 24–44, 60–80, 157–177, 183–203, and 224–244; these read LNFLLVSSLLATLAWLLAFIY, GFLLSLLALVEAVVRFTFGGL, ISTQNFFSLVLALWDAVTGPL, VVAAFLAHISSSAVAMAILLW, and VVFHLTGLVLLACVLAVILIV. The segment at 371–413 adopts an RING-type zinc-finger fold; the sequence is CVICQDQSKTVLLLPCRHLCLCQACTEILMRHPVYHRNCPLCR.

Interacts with INCA1. Interacts with TMEM43, ENDOD1, TMEM33 and TMED1 to form a complex capable of modulating innate immune signaling through the cGAS-STING pathway. Interacts with UBE2J1; this interaction is important for SQSTM1 ubiquitination.

Its subcellular location is the endoplasmic reticulum membrane. The catalysed reaction is S-ubiquitinyl-[E2 ubiquitin-conjugating enzyme]-L-cysteine + [acceptor protein]-L-lysine = [E2 ubiquitin-conjugating enzyme]-L-cysteine + N(6)-ubiquitinyl-[acceptor protein]-L-lysine.. It functions in the pathway protein modification; protein ubiquitination. In terms of biological role, E3 ubiquitin-protein ligase that plays a key role in endosome organization by retaining vesicles in the perinuclear cloud. Acts as a platform for perinuclear positioning of the endosomal system by mediating ubiquitination of SQSTM1 through interaction with the ubiquitin conjugating enzyme UBE2J1. Ubiquitinated SQSTM1 attracts specific vesicle-associated adapters, forming a molecular bridge that restrains cognate vesicles in the perinuclear region and organizes the endosomal pathway for efficient cargo transport. Also acts as a regulator of type I interferon production in response to viral infection by mediating the formation of 'Lys-11'-linked polyubiquitin chains on TMEM173/STING, leading to stabilize TMEM173/STING. Also required to limit type I interferon response by promoting autophagic degradation of IRF3. This is E3 ubiquitin-protein ligase RNF26 from Mus musculus (Mouse).